The primary structure comprises 100 residues: Elevenin-Vc1 (100 aa).

An N-terminal signal peptide occupies residues Met-1 to Ala-24. Cys-29 and Cys-38 are oxidised to a cystine. A propeptide spanning residues Lys-44–Asp-100 is cleaved from the precursor.

Belongs to the elevenin family. Monomer. In terms of tissue distribution, expressed by the venom duct.

Its subcellular location is the secreted. Its function is as follows. May mimic the function of prey elevenin neuropeptide. In vivo, intracranial injection in mice induces hyperactivity (tested at 5 and 10 nM). The polypeptide is Elevenin-Vc1 (Conus victoriae (Queen Victoria cone)).